Consider the following 1104-residue polypeptide: Protein transport protein SEC31 homolog B (1104 aa).

WD repeat units follow at residues 5–45 (KGVG…EIFK), 62–109 (PSSE…GSQP), 120–160 (VHKG…EPSH), 170–210 (ATQG…PIIN), 214–257 (SVRR…SPVR), 261–301 (GHQR…IVAE), and 304–344 (AGNN…RYGV). The residue at position 526 (T526) is a Phosphothreonine. The segment at 527–562 (PVSTSAKDFMPSDTDFSTKGEETQEMQEEEEESSDP) is disordered. Positions 549 to 560 (TQEMQEEEEESS) are enriched in acidic residues. One copy of the WD 8 repeat lies at 662-707 (TLCDALASKLMAAGNTLAAVLCYICAGNVDRTVEIWSRSLANERDG). 4 disordered regions span residues 782-811 (LSAEPETNTTASGNTQPQSTMPYNQEPTQA), 851-874 (HQAQPAPQPSFTPAPTSNAQPSMR), 892-931 (QQPTMSSHSFTGPSNNAYPVPPGPGQYAPSGPSQLGQYPN), and 952-994 (TPGV…SNVP). Composition is skewed to polar residues over residues 786-811 (PETNTTASGNTQPQSTMPYNQEPTQA), 863-874 (PAPTSNAQPSMR), and 892-908 (QQPTMSSHSFTGPSNNA). Positions 959-977 (SVQPASPPTQQAAAQAAPA) are enriched in low complexity.

It belongs to the WD repeat SEC31 family. In terms of assembly, interacts with SEC13A and SEC13B.

It is found in the golgi apparatus. The protein localises to the endoplasmic reticulum. Its function is as follows. Required for protein transport from the endoplasmic reticulum to the Golgi apparatus. This chain is Protein transport protein SEC31 homolog B, found in Arabidopsis thaliana (Mouse-ear cress).